The following is a 274-amino-acid chain: Dermonecrotic toxin SdSicTox-betaIIB1bix (274 aa).

H5 is an active-site residue. Mg(2+) is bound by residues E25 and D27. H41 acts as the Nucleophile in catalysis. Intrachain disulfides connect C45/C51 and C47/C190. Residue D85 participates in Mg(2+) binding.

This sequence belongs to the arthropod phospholipase D family. Class II subfamily. It depends on Mg(2+) as a cofactor. As to expression, expressed by the venom gland.

Its subcellular location is the secreted. The enzyme catalyses an N-(acyl)-sphingosylphosphocholine = an N-(acyl)-sphingosyl-1,3-cyclic phosphate + choline. It carries out the reaction an N-(acyl)-sphingosylphosphoethanolamine = an N-(acyl)-sphingosyl-1,3-cyclic phosphate + ethanolamine. It catalyses the reaction a 1-acyl-sn-glycero-3-phosphocholine = a 1-acyl-sn-glycero-2,3-cyclic phosphate + choline. The catalysed reaction is a 1-acyl-sn-glycero-3-phosphoethanolamine = a 1-acyl-sn-glycero-2,3-cyclic phosphate + ethanolamine. Functionally, dermonecrotic toxins cleave the phosphodiester linkage between the phosphate and headgroup of certain phospholipids (sphingolipid and lysolipid substrates), forming an alcohol (often choline) and a cyclic phosphate. This toxin acts on sphingomyelin (SM). It may also act on ceramide phosphoethanolamine (CPE), lysophosphatidylcholine (LPC) and lysophosphatidylethanolamine (LPE), but not on lysophosphatidylserine (LPS), and lysophosphatidylglycerol (LPG). It acts by transphosphatidylation, releasing exclusively cyclic phosphate products as second products. Induces dermonecrosis, hemolysis, increased vascular permeability, edema, inflammatory response, and platelet aggregation. The protein is Dermonecrotic toxin SdSicTox-betaIIB1bix of Sicarius cf. damarensis (strain GJB-2008) (Six-eyed sand spider).